We begin with the raw amino-acid sequence, 142 residues long: Protein KNATM (142 aa).

Residues Lys4–Arg36 adopt a coiled-coil conformation.

In terms of assembly, interacts with KNAT1, KNAT3, KNAT4, BEL1, BLH2, BLH4 and BLH9, but not with BLH8 or the KNATM-A and KNATM-C isoforms. Isoforms KNATM-A and KNATM-C: no interactions with KNATM-B, KNOXX or BELL proteins. As to expression, detected in inflorescences, seedlings, leaves, hydathodes, stems, roots, embryo and siliques. Expressed in a polar pattern in organ primordia and at the boundary of mature organs. Detected in the lateral domains of flower meristems, but not in the inflorescence meristem or the vegetative shoot apical meristem.

It localises to the cytoplasm. The protein localises to the nucleus. In terms of biological role, transcriptional regulator involved in leaf proximal/distal patterning. May act by sequestering BELL transcription factors. This Arabidopsis thaliana (Mouse-ear cress) protein is Protein KNATM.